Reading from the N-terminus, the 554-residue chain is Glucose-6-phosphate isomerase (554 aa).

The active-site Proton donor is E358. Catalysis depends on residues H389 and K515. The span at 527 to 540 shows a compositional bias: polar residues; the sequence is SDGSPQRQSDSSTD. The tract at residues 527–554 is disordered; sequence SDGSPQRQSDSSTDALVRRYRTQRGRTG. The span at 544–554 shows a compositional bias: basic residues; the sequence is RRYRTQRGRTG.

This sequence belongs to the GPI family.

The protein resides in the cytoplasm. It carries out the reaction alpha-D-glucose 6-phosphate = beta-D-fructose 6-phosphate. It functions in the pathway carbohydrate biosynthesis; gluconeogenesis. Its pathway is carbohydrate degradation; glycolysis; D-glyceraldehyde 3-phosphate and glycerone phosphate from D-glucose: step 2/4. Functionally, catalyzes the reversible isomerization of glucose-6-phosphate to fructose-6-phosphate. In Mycobacterium ulcerans (strain Agy99), this protein is Glucose-6-phosphate isomerase.